The primary structure comprises 65 residues: UPF0434 protein Rpal_0270 (65 aa).

It belongs to the UPF0434 family.

In Rhodopseudomonas palustris (strain TIE-1), this protein is UPF0434 protein Rpal_0270.